Consider the following 215-residue polypeptide: GTP-binding protein YPT6 (215 aa).

17–24 (GEQGVGKT) lines the GTP pocket. Positions 39-47 (YQATIGIDF) match the Effector region motif. GTP-binding positions include 65–69 (DTAGQ) and 124–127 (NKSD). A compositionally biased stretch (polar residues) spans 178–196 (NSESTPLDSENANSANQNK). The interval 178–215 (NSESTPLDSENANSANQNKPGVIDISTAEEQEQSACQC) is disordered. Residues Cys213 and Cys215 are each lipidated (S-geranylgeranyl cysteine). Cys215 bears the Cysteine methyl ester mark.

Belongs to the small GTPase superfamily. Rab family. In terms of assembly, interacts with YIF1, YIP3 and YIP4.

The protein resides in the cell membrane. In terms of biological role, protein transport. Might participate in post-Golgi transport. The sequence is that of GTP-binding protein YPT6 (YPT6) from Saccharomyces cerevisiae (strain ATCC 204508 / S288c) (Baker's yeast).